An 85-amino-acid polypeptide reads, in one-letter code: Progonadoliberin-2 (85 aa).

An N-terminal signal peptide occupies residues 1-23; it reads MCVSRLVLLFGLLLCVGAQLSNA. Position 24 is a pyrrolidone carboxylic acid (Gln-24). Position 33 is a glycine amide (Gly-33).

The protein belongs to the GnRH family.

Its subcellular location is the secreted. Its function is as follows. Stimulates the secretion of gonadotropins. The chain is Progonadoliberin-2 (gnrh2) from Morone saxatilis (Striped bass).